Reading from the N-terminus, the 2089-residue chain is Non-reducing polyketide synthase PKS16 (2089 aa).

The segment at 8–243 (VLFGDQTVDP…IKLPITAAFH (236 aa)) is N-terminal acylcarrier protein transacylase (SAT) domain (SAT). The disordered stretch occupies residues 342-364 (AGIEVSRSTEMQPRQEQRTKPRS). Positions 354–364 (PRQEQRTKPRS) are enriched in basic and acidic residues. In terms of domain architecture, Ketosynthase family 3 (KS3) spans 364–793 (SSDIAIIGYA…GGNTSLLIED (430 aa)). Residues cysteine 536, histidine 671, and histidine 710 each act as for beta-ketoacyl synthase activity in the active site. Residues 891-1214 (VFLFTGQGSQ…SIANAYNSGV (324 aa)) are malonyl-CoA:ACP transacylase (MAT) domain. The product template (PT) domain stretch occupies residues 1273 to 1586 (TTCLQVIENE…KRTTLQSLLG (314 aa)). An N-terminal hotdog fold region spans residues 1276 to 1408 (LQVIENETFT…CTVMYGDGHQ (133 aa)). Positions 1276 to 1582 (LQVIENETFT…FQQMKRTTLQ (307 aa)) constitute a PKS/mFAS DH domain. The active-site Proton acceptor; for dehydratase activity is histidine 1309. Residues 1435–1582 (IHRMLKEMIY…FQQMKRTTLQ (148 aa)) are C-terminal hotdog fold. The active-site Proton donor; for dehydratase activity is the aspartate 1495. The region spanning 1617 to 1694 (QSPVAGFSKV…ELRAFFLDKM (78 aa)) is the Carrier 1 domain. The residue at position 1654 (serine 1654) is an O-(pantetheine 4'-phosphoryl)serine. Positions 1697-1730 (PQATANDDDSDDSSDDEGPGFSRSQSNSTISTPE) are disordered. The segment covering 1702–1714 (NDDDSDDSSDDEG) has biased composition (acidic residues). The segment covering 1718-1728 (SRSQSNSTIST) has biased composition (polar residues). The 78-residue stretch at 1729–1806 (PEEPDVVNVL…DVQKALGAAP (78 aa)) folds into the Carrier 2 domain. Position 1766 is an O-(pantetheine 4'-phosphoryl)serine (serine 1766). The thioesterase (TE) domain stretch occupies residues 1848–2083 (LFLLPDGAGS…VVGGNHFSIM (236 aa)).

It participates in secondary metabolite biosynthesis. Functionally, non-reducing polyketide synthase; part of the gene cluster that mediates the biosynthesis of orcinol depsidone grayanic acid (GRA), the only major secondary metabolite known in C.grayi. The first step consists in the ring and depside synthesis by PKS16 leading to 4-O-demethylsphaerophorin, involving different orcinol-like rings, one with acetyl CoA and the other with octanoyl CoA as the starter. Further depsidone formation by the GRA cluster-specific cytochrome P450 leads to 4-O-demethylgrayanic acid. Finally, the cluster specific O-methyltransferase probably converts the 4-O-demethylgrayanic acid into grayanic acid. The protein is Non-reducing polyketide synthase PKS16 of Cladonia grayi (Gray's cup lichen).